The following is a 386-amino-acid chain: Succinate--CoA ligase [ADP-forming] subunit beta (386 aa).

The ATP-grasp domain maps to 9-244 (KEILRSYGVS…LDEEDPKEVE (236 aa)). ATP-binding positions include lysine 46, 53–55 (GRG), glutamate 99, cysteine 102, and glutamate 107. Residues asparagine 199 and aspartate 213 each coordinate Mg(2+). Residues asparagine 264 and 321-323 (GIM) each bind substrate.

Belongs to the succinate/malate CoA ligase beta subunit family. Heterotetramer of two alpha and two beta subunits. It depends on Mg(2+) as a cofactor.

It carries out the reaction succinate + ATP + CoA = succinyl-CoA + ADP + phosphate. It catalyses the reaction GTP + succinate + CoA = succinyl-CoA + GDP + phosphate. It functions in the pathway carbohydrate metabolism; tricarboxylic acid cycle; succinate from succinyl-CoA (ligase route): step 1/1. Its function is as follows. Succinyl-CoA synthetase functions in the citric acid cycle (TCA), coupling the hydrolysis of succinyl-CoA to the synthesis of either ATP or GTP and thus represents the only step of substrate-level phosphorylation in the TCA. The beta subunit provides nucleotide specificity of the enzyme and binds the substrate succinate, while the binding sites for coenzyme A and phosphate are found in the alpha subunit. The protein is Succinate--CoA ligase [ADP-forming] subunit beta of Geobacillus kaustophilus (strain HTA426).